A 429-amino-acid chain; its full sequence is Adenylosuccinate synthetase (429 aa).

Residues 12-18 (GDEGKGK) and 40-42 (GHT) contribute to the GTP site. Asp13 acts as the Proton acceptor in catalysis. Mg(2+) contacts are provided by Asp13 and Gly40. IMP-binding positions include 13–16 (DEGK), 38–41 (NAGH), Thr128, Arg142, Gln223, Thr238, and Arg302. The active-site Proton donor is His41. 298 to 304 (TTTGRAR) provides a ligand contact to substrate. GTP contacts are provided by residues Arg304, 330 to 332 (SID), and 412 to 414 (SVG).

Belongs to the adenylosuccinate synthetase family. Homodimer. Mg(2+) serves as cofactor.

Its subcellular location is the cytoplasm. It carries out the reaction IMP + L-aspartate + GTP = N(6)-(1,2-dicarboxyethyl)-AMP + GDP + phosphate + 2 H(+). Its pathway is purine metabolism; AMP biosynthesis via de novo pathway; AMP from IMP: step 1/2. Its function is as follows. Plays an important role in the de novo pathway of purine nucleotide biosynthesis. Catalyzes the first committed step in the biosynthesis of AMP from IMP. In Oceanobacillus iheyensis (strain DSM 14371 / CIP 107618 / JCM 11309 / KCTC 3954 / HTE831), this protein is Adenylosuccinate synthetase.